Here is a 107-residue protein sequence, read N- to C-terminus: Large ribosomal subunit protein uL24 (107 aa).

It belongs to the universal ribosomal protein uL24 family. Part of the 50S ribosomal subunit.

Its function is as follows. One of two assembly initiator proteins, it binds directly to the 5'-end of the 23S rRNA, where it nucleates assembly of the 50S subunit. In terms of biological role, one of the proteins that surrounds the polypeptide exit tunnel on the outside of the subunit. The protein is Large ribosomal subunit protein uL24 of Gluconacetobacter diazotrophicus (strain ATCC 49037 / DSM 5601 / CCUG 37298 / CIP 103539 / LMG 7603 / PAl5).